A 419-amino-acid chain; its full sequence is Tol-Pal system protein TolB (419 aa).

A signal peptide spans 1 to 17 (MRFIGLVLLLLSVKLFG).

The protein belongs to the TolB family. In terms of assembly, the Tol-Pal system is composed of five core proteins: the inner membrane proteins TolA, TolQ and TolR, the periplasmic protein TolB and the outer membrane protein Pal. They form a network linking the inner and outer membranes and the peptidoglycan layer.

The protein localises to the periplasm. Part of the Tol-Pal system, which plays a role in outer membrane invagination during cell division and is important for maintaining outer membrane integrity. The protein is Tol-Pal system protein TolB of Helicobacter hepaticus (strain ATCC 51449 / 3B1).